A 61-amino-acid chain; its full sequence is Photosystem II reaction center protein K (61 aa).

Positions 1-24 are excised as a propeptide; that stretch reads MLNILSFIGICLNSFLYSSSFFVA. Residues 40–60 traverse the membrane as a helical segment; sequence MPVIPLFFFLLAFVWQAAVSF.

Belongs to the PsbK family. As to quaternary structure, PSII is composed of 1 copy each of membrane proteins PsbA, PsbB, PsbC, PsbD, PsbE, PsbF, PsbH, PsbI, PsbJ, PsbK, PsbL, PsbM, PsbT, PsbX, PsbY, PsbZ, Psb30/Ycf12, at least 3 peripheral proteins of the oxygen-evolving complex and a large number of cofactors. It forms dimeric complexes.

The protein resides in the plastid. It is found in the chloroplast thylakoid membrane. In terms of biological role, one of the components of the core complex of photosystem II (PSII). PSII is a light-driven water:plastoquinone oxidoreductase that uses light energy to abstract electrons from H(2)O, generating O(2) and a proton gradient subsequently used for ATP formation. It consists of a core antenna complex that captures photons, and an electron transfer chain that converts photonic excitation into a charge separation. This is Photosystem II reaction center protein K from Cucumis sativus (Cucumber).